A 251-amino-acid chain; its full sequence is Sec-independent protein translocase protein TatC (251 aa).

6 helical membrane-spanning segments follow: residues 23 to 43 (AFIIIFAICYYFSDYIYSFLL), 73 to 93 (SAFTAFTIIIPIIALECYLFI), 104 to 124 (IIAFILFMSPILFWCGSIFVF), 159 to 179 (LVIHLIIAFGIAFQLPIVIIV), 197 to 217 (IAVVINFIIAGILTPPDILSQ), and 218 to 238 (FALAIPLLLLYETSIIICNFI).

It belongs to the TatC family. As to quaternary structure, the Tat system comprises two distinct complexes: a TatABC complex, containing multiple copies of TatA, TatB and TatC subunits, and a separate TatA complex, containing only TatA subunits. Substrates initially bind to the TatABC complex, which probably triggers association of the separate TatA complex to form the active translocon.

The protein resides in the cell inner membrane. Its function is as follows. Part of the twin-arginine translocation (Tat) system that transports large folded proteins containing a characteristic twin-arginine motif in their signal peptide across membranes. Together with TatB, TatC is part of a receptor directly interacting with Tat signal peptides. This Rickettsia prowazekii (strain Madrid E) protein is Sec-independent protein translocase protein TatC.